The following is a 377-amino-acid chain: Aquaporin-2 (377 aa).

At 1 to 14 (MAANKGINGGIKNH) the chain is on the cytoplasmic side. A helical transmembrane segment spans residues 15 to 35 (FIAFLGEFVGTFLFLFFAYGG). Topologically, residues 36–56 (TQTANQTSQKNPSIVASPDIN) are extracellular. N-linked (GlcNAc...) asparagine glycosylation is present at N40. The helical transmembrane segment at 57 to 77 (QLLYIALIFGFSLTVNVWIFF) threads the bilayer. Topologically, residues 78-87 (RVSGGLFNPA) are cytoplasmic. The NPA 1 signature appears at 85–87 (NPA). Residues 88-108 (VTIALCLVGVVGPVRSIFIFI) traverse the membrane as a helical segment. Over 109-144 (AQVVASIAAAAAVRGLLPGDTVLFSCALAPGTSIAQ) the chain is Extracellular. The helical transmembrane segment at 145–165 (GLFLEMFFTIELVFTILMLAA) threads the bilayer. Topologically, residues 166–171 (EKTKVT) are cytoplasmic. A helical membrane pass occupies residues 172–192 (FVAPVGIGLSLFVAELMGVAW). Residues 193-215 (TGGALNPARAFGAEVIGGFRGYH) are Extracellular-facing. The NPA 2 signature appears at 198–200 (NPA). The chain crosses the membrane as a helical span at residues 216–236 (WIYWLGPLMGAVLAAGFYKVI). Residues 237-377 (KFLNYEQVNG…ANAQNRAKTP (141 aa)) are Cytoplasmic-facing. Disordered stretches follow at residues 278-332 (LFQT…RENE) and 358-377 (RLSG…AKTP). Polar residues-rich tracts occupy residues 315–328 (PAQQ…ASTI) and 368–377 (ANAQNRAKTP).

This sequence belongs to the MIP/aquaporin (TC 1.A.8) family.

Its subcellular location is the membrane. It carries out the reaction H2O(in) = H2O(out). It catalyses the reaction glycerol(in) = glycerol(out). Functionally, water channel required to facilitate the transport of water across membranes. Involved in conidiation. This is Aquaporin-2 from Botryotinia fuckeliana (strain B05.10) (Noble rot fungus).